A 188-amino-acid chain; its full sequence is MPDRNIVVLTAPSGAGKTTIAHRVLEAMPDMQFSVSATTRAARPDETDGVDYHFLSPEEFRARIDAGDLLEYEEVYPDQFYGTLRSEVEDRAEDGPVLLDIDVKGALNVKRIFGDDALILFVAPPSLDELQRRLEGRGTEDRESLQDRLDRVEQEMDRADDCDAVVVNDDLDPAVEETLTRIRQFLSS.

The 180-residue stretch at 4 to 183 (RNIVVLTAPS…AVEETLTRIR (180 aa)) folds into the Guanylate kinase-like domain. 11–18 (APSGAGKT) serves as a coordination point for ATP.

Belongs to the guanylate kinase family.

The protein resides in the cytoplasm. It carries out the reaction GMP + ATP = GDP + ADP. In terms of biological role, essential for recycling GMP and indirectly, cGMP. This is Guanylate kinase from Salinibacter ruber (strain DSM 13855 / M31).